A 236-amino-acid chain; its full sequence is Large ribosomal subunit protein uL1 (236 aa).

This sequence belongs to the universal ribosomal protein uL1 family. In terms of assembly, part of the 50S ribosomal subunit.

In terms of biological role, binds directly to 23S rRNA. The L1 stalk is quite mobile in the ribosome, and is involved in E site tRNA release. Protein L1 is also a translational repressor protein, it controls the translation of the L11 operon by binding to its mRNA. The sequence is that of Large ribosomal subunit protein uL1 from Sorangium cellulosum (strain So ce56) (Polyangium cellulosum (strain So ce56)).